The sequence spans 430 residues: Rosmarinate synthase (430 aa).

The active-site Proton acceptor is the His152. Positions 178–210 (TPLPHFDRSSLSARNPPQPQFSHAEYQPPPTLE) are disordered. The Proton acceptor role is filled by Asp377.

Belongs to the plant acyltransferase family.

The catalysed reaction is (2R)-3-(3,4-dihydroxyphenyl)lactate + (E)-caffeoyl-CoA = (R)-rosmarinate + CoA. Functionally, involved in the biosynthesis of rosmarinic acid, a compound with antiviral, antimicrobial and anti-inflammatory activities. Can use 4-coumaroyl- and caffeoyl-CoA as hydroxycinnamoyl donors and 4-Hydroxyphenyllactate and 3.4-Dihydroxyphenyllactate, but not shikimate or quinate, as hydroxycinnamoyl acceptors. Can also putatively catalyze amide formation with D-amino acids as acceptors. This chain is Rosmarinate synthase (RAS), found in Plectranthus scutellarioides (Coleus).